The primary structure comprises 287 residues: 4-hydroxybenzoate octaprenyltransferase (287 aa).

Transmembrane regions (helical) follow at residues 22–42, 45–65, 91–111, 114–134, 139–159, 161–181, 212–232, 236–256, and 267–287; these read IGTL…AQGF, LGVL…GCVI, TSTE…LLVL, NSLT…YPFM, QLPQ…AFAA, ANAL…WTIA, IIIA…GWLE, WIYF…QLQI, and AFLD…LGYL.

Belongs to the UbiA prenyltransferase family. Requires Mg(2+) as cofactor.

It is found in the cell inner membrane. The catalysed reaction is all-trans-octaprenyl diphosphate + 4-hydroxybenzoate = 4-hydroxy-3-(all-trans-octaprenyl)benzoate + diphosphate. It participates in cofactor biosynthesis; ubiquinone biosynthesis. Catalyzes the prenylation of para-hydroxybenzoate (PHB) with an all-trans polyprenyl group. Mediates the second step in the final reaction sequence of ubiquinone-8 (UQ-8) biosynthesis, which is the condensation of the polyisoprenoid side chain with PHB, generating the first membrane-bound Q intermediate 3-octaprenyl-4-hydroxybenzoate. The protein is 4-hydroxybenzoate octaprenyltransferase of Psychromonas ingrahamii (strain DSM 17664 / CCUG 51855 / 37).